A 360-amino-acid polypeptide reads, in one-letter code: DNA polymerase IV (360 aa).

Residues 8-189 (IIHVDMDCFF…LPLEKIPGVG (182 aa)) enclose the UmuC domain. The Mg(2+) site is built by Asp-12 and Asp-107. Glu-108 is an active-site residue.

Belongs to the DNA polymerase type-Y family. Monomer. Mg(2+) is required as a cofactor.

The protein localises to the cytoplasm. It catalyses the reaction DNA(n) + a 2'-deoxyribonucleoside 5'-triphosphate = DNA(n+1) + diphosphate. Functionally, poorly processive, error-prone DNA polymerase involved in untargeted mutagenesis. Copies undamaged DNA at stalled replication forks, which arise in vivo from mismatched or misaligned primer ends. These misaligned primers can be extended by PolIV. Exhibits no 3'-5' exonuclease (proofreading) activity. May be involved in translesional synthesis, in conjunction with the beta clamp from PolIII. The sequence is that of DNA polymerase IV from Vibrio cholerae serotype O1 (strain ATCC 39541 / Classical Ogawa 395 / O395).